Here is a 908-residue protein sequence, read N- to C-terminus: Vacuolar membrane protease (908 aa).

Residues 1–25 (MTSGEEEEGTREQVPVSQPTGTTSI) form a disordered region. The Cytoplasmic portion of the chain corresponds to 1 to 48 (MTSGEEEEGTREQVPVSQPTGTTSIVSTKEKQPNIFIRAIRATFGYRK). Polar residues predominate over residues 15-25 (PVSQPTGTTSI). Residues 49 to 69 (TSLTLFVLLTIFFTVAFSSYD) form a helical membrane-spanning segment. Residues 70–381 (NSLDFTIDLP…FSTSVTTLNT (312 aa)) are Vacuolar-facing. Residues Asn-143 and Asn-162 are each glycosylated (N-linked (GlcNAc...) asparagine). Zn(2+) contacts are provided by His-176 and Asp-188. The Proton acceptor role is filled by Glu-221. 3 residues coordinate Zn(2+): Glu-222, Glu-247, and His-319. Asn-354 carries N-linked (GlcNAc...) asparagine glycosylation. Residues 382-402 (INMVLIVLFPVLSGPLLFITV) traverse the membrane as a helical segment. The Cytoplasmic segment spans residues 403-411 (RYKKWNIGT). The helical transmembrane segment at 412–432 (ANLFSLPLAIVITSLVGAVVV) threads the bilayer. Residues 433 to 449 (NQGFRLVNEFLPASRPM) lie on the Vacuolar side of the membrane. The helical transmembrane segment at 450–470 (LLVTTTTSILLLTYYILLNGI) threads the bilayer. The Cytoplasmic portion of the chain corresponds to 471-480 (NFVSPSGDQK). The chain crosses the membrane as a helical span at residues 481–501 (LVSIIQISFIYWIALIFVTRG). The Vacuolar portion of the chain corresponds to 502–514 (LSQNAIGDDHTGE). Residues 515-535 (FAFTILFLLEATASLFGLIGW) form a helical membrane-spanning segment. The Cytoplasmic segment spans residues 536–602 (TFTRSVKEPT…MQHFGYDWSL (67 aa)). Residues 543-584 (EPTGDEEPLLNGRMERYVDGSDDEDDVEEEDDEDQSEEENHQ) are disordered. Over residues 562–579 (GSDDEDDVEEEDDEDQSE) the composition is skewed to acidic residues. A helical transmembrane segment spans residues 603–623 (QFLLIVPISSLVIYNSGWLVI). At 624-638 (DGINKSIQESLVAEN) the chain is on the vacuolar side. Asn-627 carries N-linked (GlcNAc...) asparagine glycosylation. The chain crosses the membrane as a helical span at residues 639–659 (FIYLIIQLFSQFWILPILPFV). The Cytoplasmic segment spans residues 660–664 (YKLNR). Residues 665–685 (FMVLGLIAFALVGVTLISSVD) traverse the membrane as a helical segment. Residues 686-908 (PFNQDNPLKL…LVSLTNRIEV (223 aa)) lie on the Vacuolar side of the membrane. Residues Asn-752 and Asn-764 are each glycosylated (N-linked (GlcNAc...) asparagine).

The protein belongs to the peptidase M28 family. Zn(2+) is required as a cofactor.

The protein resides in the vacuole membrane. Its function is as follows. May be involved in vacuolar sorting and osmoregulation. This Candida tropicalis (strain ATCC MYA-3404 / T1) (Yeast) protein is Vacuolar membrane protease.